The chain runs to 647 residues: RalA-binding protein 1 (647 aa).

2 disordered regions span residues 1 to 151 (MTEC…EKKC) and 163 to 186 (WKEKKKKKKPTQEPEVPQTDAPSL). Residue Thr2 is modified to N-acetylthreonine. The segment covering 24-33 (LTRTPSSEEI) has biased composition (polar residues). Ser29, Ser30, and Ser34 each carry phosphoserine. The residue at position 44 (Thr44) is a Phosphothreonine. Phosphoserine is present on residues Ser48 and Ser62. Residues 52–68 (DILHEPPDIVSDDEKDH) are compositionally biased toward basic and acidic residues. 69 to 74 (GKKKGK) serves as a coordination point for ATP. Residues 69-79 (GKKKGKFKKKE) are compositionally biased toward basic residues. Residues Ser92 and Ser93 each carry the phosphoserine modification. Basic residues predominate over residues 102 to 118 (KMKRSKGIHVFKKPSFS). Positions 102-119 (KMKRSKGIHVFKKPSFSK) are nuclear localization signal. Over residues 119-151 (KKKEKDFKIKEKPKEEKHKEEKHKEEKHKEKKC) the composition is skewed to basic and acidic residues. The interval 154 to 219 (FTAADVVKQW…PAVFRECVDY (66 aa)) is mediates association with membranes and could form transmembrane domains. The region spanning 192-380 (APFADAVERT…VLLKQVTRPL (189 aa)) is the Rho-GAP domain. A mediates interaction with RALA and RALB region spans residues 403 to 499 (RRQEFLLNCL…LTEQEELLAM (97 aa)). 418-425 (GGIKDFSK) contributes to the ATP binding site. Ser461 and Ser463 each carry phosphoserine. The interval 500–647 (EQFLRRQIAS…PSKDRKETPI (148 aa)) is mediates interaction with REPS1 and REPS2. 2 disordered regions span residues 525 to 550 (QSRQHGRSETEEYSSDSESESEDEEE) and 601 to 647 (EQQL…ETPI). The segment covering 535 to 550 (EEYSSDSESESEDEEE) has biased composition (acidic residues). A compositionally biased stretch (basic and acidic residues) spans 628 to 647 (RAAKEQAKPSPSKDRKETPI). Ser637 carries the post-translational modification Phosphoserine.

In terms of assembly, interacts with the GTP-bound form of RALA (via effector domain); during mitosis, recruits RALBP1 to the mitochondrion where it promotes DNM1L phosphorylation and mitochondrial fission. Interacts with DNM1L; mediates its mitotic kinase cyclin B-CDK1-mediated phosphorylation during mitosis to promote mitochondrial fission. Interacts with the mitotic kinase cyclin B-CDK1 during mitosis. Interacts with the GTP-bound form of RALB (via effector domain). Interacts with REPS1; the interaction is direct and does not affect RALA-binding nor GTPase activator activity of RALBP1. Interacts with REPS2; the interaction is direct and does not affect RALA-binding nor GTPase activator activity of RALBP1. Interacts with EPN1, NUMB and TFAP2A during interphase and mitosis. Interacts with AP2M1; as part of the AP2 complex. Interacts with CDC42. Interacts with RAC1. Post-translationally, tyrosine-phosphorylated upon stimulation of cells with EGF. May undergo proteolytic cleavage to give peptides which reassemble to form a transporter complex. Ubiquitously expressed.

It localises to the cell membrane. The protein resides in the cytoplasm. It is found in the cytosol. Its subcellular location is the cytoskeleton. The protein localises to the spindle pole. It localises to the nucleus. The protein resides in the mitochondrion. The catalysed reaction is an S-substituted glutathione(in) + ATP + H2O = an S-substituted glutathione(out) + ADP + phosphate + H(+). The enzyme catalyses ATP + H2O + xenobioticSide 1 = ADP + phosphate + xenobioticSide 2.. It carries out the reaction leukotriene C4(in) + ATP + H2O = leukotriene C4(out) + ADP + phosphate + H(+). Multifunctional protein that functions as a downstream effector of RALA and RALB. As a GTPase-activating protein/GAP can inactivate CDC42 and RAC1 by stimulating their GTPase activity. As part of the Ral signaling pathway, may also regulate ligand-dependent EGF and insulin receptors-mediated endocytosis. During mitosis, may act as a scaffold protein in the phosphorylation of EPSIN/EPN1 by the mitotic kinase cyclin B-CDK1, preventing endocytosis during that phase of the cell cycle. During mitosis, also controls mitochondrial fission as an effector of RALA. Recruited to mitochondrion by RALA, acts as a scaffold to foster the mitotic kinase cyclin B-CDK1-mediated phosphorylation and activation of DNM1L. In terms of biological role, could also function as a primary ATP-dependent active transporter for glutathione conjugates of electrophiles. May also actively catalyze the efflux of a wide range of substrates including xenobiotics like doxorubicin (DOX) contributing to cell multidrug resistance. This is RalA-binding protein 1 from Rattus norvegicus (Rat).